The primary structure comprises 474 residues: 3-isopropylmalate dehydratase large subunit (474 aa).

[4Fe-4S] cluster-binding residues include Cys-353, Cys-414, and Cys-417.

This sequence belongs to the aconitase/IPM isomerase family. LeuC type 1 subfamily. Heterodimer of LeuC and LeuD. [4Fe-4S] cluster serves as cofactor.

The enzyme catalyses (2R,3S)-3-isopropylmalate = (2S)-2-isopropylmalate. It participates in amino-acid biosynthesis; L-leucine biosynthesis; L-leucine from 3-methyl-2-oxobutanoate: step 2/4. In terms of biological role, catalyzes the isomerization between 2-isopropylmalate and 3-isopropylmalate, via the formation of 2-isopropylmaleate. This is 3-isopropylmalate dehydratase large subunit from Xylella fastidiosa (strain M23).